A 158-amino-acid polypeptide reads, in one-letter code: Retinoic acid receptor beta (158 aa).

Positions 1–18 (RHSAQSIETQSTSSEELV) are enriched in low complexity. The tract at residues 1–24 (RHSAQSIETQSTSSEELVPSPPSP) is disordered. The nuclear receptor DNA-binding region spans 31 to 106 (YKPCFVCQDK…VGMSKESVRN (76 aa)). 2 NR C4-type zinc fingers span residues 34-54 (CFVCQDKSSGYHYGVSACEGC) and 70-94 (CHRDKNCVINKVTRNRCQYCRLQRC). Residues 129–158 (ELDDLTEKIRKAHQETFPSLCQLGKYTTNS) enclose the NR LBD domain.

This sequence belongs to the nuclear hormone receptor family. NR1 subfamily. In terms of assembly, heterodimer; with a RXR molecule. Binds DNA preferentially as a RAR/RXR heterodimer.

Its subcellular location is the nucleus. In terms of biological role, receptor for retinoic acid. Retinoic acid receptors bind as heterodimers to their target response elements in response to their ligands, all-trans or 9-cis retinoic acid, and regulate gene expression in various biological processes. The RAR/RXR heterodimers bind to the retinoic acid response elements (RARE) composed of tandem 5'-AGGTCA-3' sites known as DR1-DR5. This is Retinoic acid receptor beta (RARB) from Notophthalmus viridescens (Eastern newt).